The chain runs to 50 residues: Ribosome-inactivating protein lyophyllin (50 aa).

The catalysed reaction is Endohydrolysis of the N-glycosidic bond at one specific adenosine on the 28S rRNA.. N-glycosylase that inhibits protein synthesis by depurinating ribosomal rRNA, and thus acts as a ribosomal inactivating protein (RIP). Has adenine polynucleotide glycosidase activity on the poly(A) substrate A30-ssDNA. Inhibits cell-free translation in rabbit reticulocyte lysate system with an IC(50) of 1 nM. May function in the defense response to pathogens. Displays antifungal activity against C.comatus and P.piricola, but not against R.solani, M.arachidicola and C.gossypii. Inhibits mycelial growth in P.piricola with an IC(50) of 2.5 uM. Has cytotoxic activity against the human cancer cell lines Hela, HepG2, and JAR, with IC(50) of 358.8, 489.8, and 926.9 nM respectively. It also inhibits HIV-1 reverse transcriptase activity (IC(50)=7.9 nM) and disrupts mouse embryonic development. This Lyophyllum shimeji (Hon-shimeji) protein is Ribosome-inactivating protein lyophyllin.